The chain runs to 779 residues: MFTNWRIFAVNRQKTFSVHIHTTCYCKIKANLKRSKTQVPLTRSYSSPPGIVGNEVKSLHSIINPPVAKIRNIGIMAHIDAGKTTTTERILYYSGYTRSLGDVDDGDTVTDFMAQERERGITIQSAAVTLDWKGYRVNLIDTPGHVDFTLEVERCLRVLDGAVAVFDASAGVEAQTLTVWRQADKHKIPRICFLNKMDKTGASFNYAVESIREKLKAKPLILQLPIGEARTFQGVVDVVNREKLIWNSDSDDGKDFERKPLSEASDPTLLKETVEARNSLIEQVADLDDEFADLVLGEFSEDFDLVPAEKLQAAIHRVTLAQAAVPVLCGSALKNKGVQPLLDAVTTYLPSPEEREHGFLQWYKGDLCALAFKVLHDKQRGPLVFLRIYSGTLTPQSAVHNVNRNCTERMSRLLLPFADQHVEIPSLTAGNIALTVGLKQTATGDTIVSSKSSALAAARRAGKGERKPGRISEAESVLLAGVEIPEPVFFCTIEPPSAAKQPDLDHALEHLQREDPSLKVKLDPDSGQTVLCGMGELHIEIIHDRIKREYGLETYLGPLQVAYRETILNSVRATDTLDRVLGDKRHFARAELEVRPAEEPCGVATIEYADSVGEDMLQAPREDIENAIHSACLQGPLLGSPIQDVAVTLHSLMIHPGTSTTMVTACISRCVQKALKKADKQVLEPLMSLEVTVSREYLSPVLADLAQRRGNIQEIQTRQDNKVVLGFVPLAEIMGYSTVLRTLTSGSATFALELSTYQAMSPQDQRTLLSQRSGLARVL.

One can recognise a tr-type G domain in the interval 68 to 353 (AKIRNIGIMA…AVTTYLPSPE (286 aa)). GTP is bound by residues 77–84 (AHIDAGKT), 141–145 (DTPGH), and 195–198 (NKMD).

It belongs to the TRAFAC class translation factor GTPase superfamily. Classic translation factor GTPase family. EF-G/EF-2 subfamily.

The protein localises to the mitochondrion. The catalysed reaction is GTP + H2O = GDP + phosphate + H(+). Functionally, mitochondrial GTPase that mediates the disassembly of ribosomes from messenger RNA at the termination of mitochondrial protein biosynthesis. Acts in collaboration with MRRF. GTP hydrolysis follows the ribosome disassembly and probably occurs on the ribosome large subunit. Not involved in the GTP-dependent ribosomal translocation step during translation elongation. The chain is Ribosome-releasing factor 2, mitochondrial (Gfm2) from Rattus norvegicus (Rat).